A 770-amino-acid polypeptide reads, in one-letter code: Cullin-1 (770 aa).

Positions 700-761 (DRKLQIQAAI…EKEYLMRVEG (62 aa)) constitute a Cullin neddylation domain. Lysine 714 is covalently cross-linked (Glycyl lysine isopeptide (Lys-Gly) (interchain with G-Cter in NEDD8)).

Belongs to the cullin family. As to quaternary structure, part of a complex that includes culA, fbxA and regA. Formation of this complex is dependent on the MAP kinase erkB. In terms of processing, neddylated; which enhances the ubiquitination activity of SCF.

Its pathway is protein modification; protein ubiquitination. Functionally, probable core component of cullin-based SCF-like E3 ubiquitin-protein ligase complexes which mediate the ubiquitination and subsequent proteasomal degradation of target proteins. The E3 ubiquitin-protein ligase activity of the complex is dependent on the neddylation of the cullin subunit. Required at several stages during development. CulA and fbxA regulate multicellular development by targeting regA for degradation via a pathway that requires erkB function, leading to an increase in cAMP and PKA activity. The chain is Cullin-1 (culA) from Dictyostelium discoideum (Social amoeba).